The primary structure comprises 119 residues: MKYEISKIRAENRNYHKKEKNKVSKGYQALISSSFYQTIPSSSSFAFPQSVRVVVADTLLVHHTFDWKHHPLAVAYRSHRKSQQHQTQGNQVLRGTRKLESPTVGPRPGLRRQHTRNFL.

Residues 78 to 119 form a disordered region; sequence SHRKSQQHQTQGNQVLRGTRKLESPTVGPRPGLRRQHTRNFL. The segment covering 84–93 has biased composition (polar residues); sequence QHQTQGNQVL. The span at 109-119 shows a compositional bias: basic residues; it reads GLRRQHTRNFL.

This is an uncharacterized protein from Saccharomyces cerevisiae (strain ATCC 204508 / S288c) (Baker's yeast).